The sequence spans 78 residues: Major outer membrane lipoprotein Lpp (78 aa).

Positions 1–20 (MNRTKIVLGAVVLASTLLAG) are cleaved as a signal peptide. A lipid anchor (N-palmitoyl cysteine) is attached at cysteine 21. Residue cysteine 21 is the site of S-diacylglycerol cysteine attachment. Repeats lie at residues 24–34 (TAKVDQLTSDI) and 38–48 (NAKVDQLSNDV). Residues 27–75 (VDQLTSDIQTLNAKVDQLSNDVNAVHTDVQAAKDDAARANQRLDNQVRS) are a coiled coil. Lysine 78 is subject to N6-murein peptidoglycan lysine.

This sequence belongs to the Lpp family. In terms of assembly, homotrimer.

The protein localises to the cell outer membrane. It localises to the secreted. It is found in the cell wall. A highly abundant outer membrane lipoprotein that controls the distance between the inner and outer membranes. The only protein known to be covalently linked to the peptidoglycan network (PGN). Also non-covalently binds the PGN. The link between the cell outer membrane and PGN contributes to maintenance of the structural and functional integrity of the cell envelope, and maintains the correct distance between the PGN and the outer membrane. In Photorhabdus laumondii subsp. laumondii (strain DSM 15139 / CIP 105565 / TT01) (Photorhabdus luminescens subsp. laumondii), this protein is Major outer membrane lipoprotein Lpp.